The primary structure comprises 392 residues: Magnesium-chelatase 38 kDa subunit (392 aa).

Over residues 1-17 (MTQTANAAKKTTSTKAS) the composition is skewed to low complexity. A disordered region spans residues 1–21 (MTQTANAAKKTTSTKASAAKE). Residue 80–87 (GHRGTGKS) coordinates ATP.

Belongs to the Mg-chelatase subunits D/I family.

The catalysed reaction is protoporphyrin IX + Mg(2+) + ATP + H2O = Mg-protoporphyrin IX + ADP + phosphate + 3 H(+). It functions in the pathway porphyrin-containing compound metabolism; bacteriochlorophyll biosynthesis. Involved in bacteriochlorophyll biosynthesis; introduces a magnesium ion into protoporphyrin IX to yield Mg-protoporphyrin IX. The protein is Magnesium-chelatase 38 kDa subunit (bchI) of Chlorobaculum tepidum (strain ATCC 49652 / DSM 12025 / NBRC 103806 / TLS) (Chlorobium tepidum).